A 201-amino-acid polypeptide reads, in one-letter code: NADH-quinone oxidoreductase subunit C 1 (201 aa).

This sequence belongs to the complex I 30 kDa subunit family. NDH-1 is composed of 14 different subunits. Subunits NuoB, C, D, E, F, and G constitute the peripheral sector of the complex.

Its subcellular location is the cell inner membrane. It catalyses the reaction a quinone + NADH + 5 H(+)(in) = a quinol + NAD(+) + 4 H(+)(out). Functionally, NDH-1 shuttles electrons from NADH, via FMN and iron-sulfur (Fe-S) centers, to quinones in the respiratory chain. The immediate electron acceptor for the enzyme in this species is believed to be ubiquinone. Couples the redox reaction to proton translocation (for every two electrons transferred, four hydrogen ions are translocated across the cytoplasmic membrane), and thus conserves the redox energy in a proton gradient. The chain is NADH-quinone oxidoreductase subunit C 1 from Rhizobium meliloti (strain 1021) (Ensifer meliloti).